We begin with the raw amino-acid sequence, 305 residues long: GTPase Era (305 aa).

Residues 13 to 181 enclose the Era-type G domain; that stretch reads RCGYVAIVGR…EKLVAERLPE (169 aa). Residues 21 to 28 form a G1 region; sequence GRPNVGKS. 21–28 serves as a coordination point for GTP; the sequence is GRPNVGKS. The tract at residues 47–51 is G2; it reads QTTRH. The interval 68–71 is G3; the sequence is DTPG. GTP is bound by residues 68-72 and 130-133; these read DTPGL and NKTD. The tract at residues 130–133 is G4; sequence NKTD. Positions 160-162 are G5; the sequence is ISA. Residues 204–288 enclose the KH type-2 domain; that stretch reads VREKIMRQLG…MLNLWVKVKG (85 aa).

It belongs to the TRAFAC class TrmE-Era-EngA-EngB-Septin-like GTPase superfamily. Era GTPase family. Monomer.

It localises to the cytoplasm. The protein resides in the cell inner membrane. In terms of biological role, an essential GTPase that binds both GDP and GTP, with rapid nucleotide exchange. Plays a role in 16S rRNA processing and 30S ribosomal subunit biogenesis and possibly also in cell cycle regulation and energy metabolism. The polypeptide is GTPase Era (Pseudomonas aeruginosa (strain LESB58)).